The sequence spans 318 residues: uncharacterized protein (318 aa).

4 helical membrane-spanning segments follow: residues 112–132, 147–167, 209–229, and 237–257; these read VIGV…PVFL, IAIE…FLSM, CGSS…LLVP, and VIDR…VLQL.

It is found in the cell membrane. This is an uncharacterized protein from Bacillus subtilis (strain 168).